A 639-amino-acid chain; its full sequence is CTTNBP2 N-terminal-like protein (639 aa).

The stretch at 87 to 285 (MKQCKNMQER…DLEASHQHSS (199 aa)) forms a coiled coil. Phosphoserine occurs at positions 284 and 285. Disordered stretches follow at residues 387–430 (VENG…PCSS), 463–490 (RHKF…LSPT), and 511–609 (RFTS…AASL). 2 stretches are compositionally biased toward low complexity: residues 407 to 430 (PSSG…PCSS) and 467 to 477 (QSQADQDQQAS). Phosphoserine is present on residues Ser481, Ser488, Ser523, Ser527, Ser560, Ser563, and Ser568. Polar residues predominate over residues 511–529 (RFTSQQGPIKPVSPNSSPF). Residues Thr570 and Thr590 each carry the phosphothreonine modification. The segment covering 587 to 600 (PGLTPSPSATTPLT) has biased composition (low complexity). A Phosphoserine modification is found at Ser592.

As to quaternary structure, interacts with CTTN/cortactin; this interaction may redistribute CTTN to stress fibers. May form homomers. Associates with the core of STRIPAK complexes composed of PP2A catalytic and scaffolding subunits, the striatins (PP2A regulatory subunits), the striatin-associated proteins MOB4, STRIP1 and STRIP2, PDCD10 and members of the STE20 kinases, such as STK24 and STK26.

The protein localises to the cell projection. It is found in the lamellipodium. Its subcellular location is the cytoplasm. The protein resides in the cytoskeleton. It localises to the stress fiber. Regulates lamellipodial actin dynamics in a CTTN-dependent manner. Associates with core striatin-interacting phosphatase and kinase (STRIPAK) complex to form CTTNBP2NL-STRIPAK complexes. STRIPAK complexes have critical roles in protein (de)phosphorylation and are regulators of multiple signaling pathways including Hippo, MAPK, nuclear receptor and cytoskeleton remodeling. Different types of STRIPAK complexes are involved in a variety of biological processes such as cell growth, differentiation, apoptosis, metabolism and immune regulation. The chain is CTTNBP2 N-terminal-like protein (CTTNBP2NL) from Pongo abelii (Sumatran orangutan).